Reading from the N-terminus, the 242-residue chain is Biosynthetic peptidoglycan transglycosylase (242 aa).

The chain crosses the membrane as a helical span at residues 19–39; that stretch reads ILAALAVFWGGGIALFSVVPV.

It belongs to the glycosyltransferase 51 family.

It is found in the cell inner membrane. The catalysed reaction is [GlcNAc-(1-&gt;4)-Mur2Ac(oyl-L-Ala-gamma-D-Glu-L-Lys-D-Ala-D-Ala)](n)-di-trans,octa-cis-undecaprenyl diphosphate + beta-D-GlcNAc-(1-&gt;4)-Mur2Ac(oyl-L-Ala-gamma-D-Glu-L-Lys-D-Ala-D-Ala)-di-trans,octa-cis-undecaprenyl diphosphate = [GlcNAc-(1-&gt;4)-Mur2Ac(oyl-L-Ala-gamma-D-Glu-L-Lys-D-Ala-D-Ala)](n+1)-di-trans,octa-cis-undecaprenyl diphosphate + di-trans,octa-cis-undecaprenyl diphosphate + H(+). The protein operates within cell wall biogenesis; peptidoglycan biosynthesis. Functionally, peptidoglycan polymerase that catalyzes glycan chain elongation from lipid-linked precursors. The sequence is that of Biosynthetic peptidoglycan transglycosylase from Salmonella heidelberg (strain SL476).